Here is a 191-residue protein sequence, read N- to C-terminus: Small ribosomal subunit protein uS11m (191 aa).

Positions 37-62 (PRLEDSAARQNTEREAAPSRFSLYPP) are disordered. Positions 38 to 53 (RLEDSAARQNTEREAA) are enriched in basic and acidic residues.

This sequence belongs to the universal ribosomal protein uS11 family. As to quaternary structure, component of the mitochondrial ribosome small subunit (28S) which comprises a 12S rRNA and about 30 distinct proteins.

Its subcellular location is the mitochondrion. The sequence is that of Small ribosomal subunit protein uS11m (Mrps11) from Mus musculus (Mouse).